The chain runs to 285 residues: Ribose-phosphate pyrophosphokinase (285 aa).

Residues aspartate 33–glutamate 35 and arginine 91–glutamine 92 each bind ATP. 2 residues coordinate Mg(2+): histidine 125 and aspartate 162. Lysine 185 is an active-site residue. D-ribose 5-phosphate is bound by residues arginine 187, aspartate 211, and serine 215–threonine 219.

This sequence belongs to the ribose-phosphate pyrophosphokinase family. Class III (archaeal) subfamily. Requires Mg(2+) as cofactor.

Its subcellular location is the cytoplasm. The catalysed reaction is D-ribose 5-phosphate + ATP = 5-phospho-alpha-D-ribose 1-diphosphate + AMP + H(+). It functions in the pathway metabolic intermediate biosynthesis; 5-phospho-alpha-D-ribose 1-diphosphate biosynthesis; 5-phospho-alpha-D-ribose 1-diphosphate from D-ribose 5-phosphate (route I): step 1/1. In terms of biological role, involved in the biosynthesis of the central metabolite phospho-alpha-D-ribosyl-1-pyrophosphate (PRPP) via the transfer of pyrophosphoryl group from ATP to 1-hydroxyl of ribose-5-phosphate (Rib-5-P). The protein is Ribose-phosphate pyrophosphokinase of Methanothermobacter thermautotrophicus (strain ATCC 29096 / DSM 1053 / JCM 10044 / NBRC 100330 / Delta H) (Methanobacterium thermoautotrophicum).